Consider the following 262-residue polypeptide: MFRTVPKTTLLAPIQRRTLLNGNYPKAYPEHVPLTCLGRAVLAVGSGFGTFFDSRRGDLVATLGEATAQPYFIYKLREQMLKDPTGRRLLREQPRMTSKSLDLDKLRNMKVGSIGRTYVEWLDKEGVSPDTRAQVRYIDDPECAYVMQRYRESHDFYHALTGLPIIMEGELALKAFEWANTGLPMSGLGMVLTPLKFKPKQRKRYFDVYLPWALYNGFRSKPVINVYWEEVLEKDAEELRRDLGIEQPPDLRQMKKDMAKKK.

The Zn(2+) site is built by His-154, Asp-155, His-158, and Glu-170. The interval 243-262 (LGIEQPPDLRQMKKDMAKKK) is disordered. The span at 252 to 262 (RQMKKDMAKKK) shows a compositional bias: basic and acidic residues.

The protein belongs to the COQ4 family. Component of a multi-subunit COQ enzyme complex, composed of at least COQ3, COQ4, COQ5, COQ6, COQ7 and COQ9. It depends on Zn(2+) as a cofactor.

The protein localises to the mitochondrion inner membrane. It catalyses the reaction a 4-hydroxy-3-methoxy-5-(all-trans-polyprenyl)benzoate + H(+) = a 2-methoxy-6-(all-trans-polyprenyl)phenol + CO2. Its pathway is cofactor biosynthesis; ubiquinone biosynthesis. Its function is as follows. Lyase that catalyzes the C1-decarboxylation of 4-hydroxy-3-methoxy-5-(all-trans-polyprenyl)benzoic acid into 2-methoxy-6-(all-trans-polyprenyl)phenol during ubiquinone biosynthesis. The polypeptide is Ubiquinone biosynthesis protein COQ4, mitochondrial (Yarrowia lipolytica (strain CLIB 122 / E 150) (Yeast)).